The chain runs to 238 residues: Ribitol-5-phosphate cytidylyltransferase (238 aa).

Residues 7–10 (FAGG) and 80–86 (GETGQES) each bind CTP.

The protein belongs to the IspD/TarI cytidylyltransferase family. TarI subfamily.

The enzyme catalyses D-ribitol 5-phosphate + CTP + H(+) = CDP-L-ribitol + diphosphate. Its function is as follows. Catalyzes the transfer of the cytidylyl group of CTP to D-ribitol 5-phosphate. The protein is Ribitol-5-phosphate cytidylyltransferase of Vibrio parahaemolyticus serotype O3:K6 (strain RIMD 2210633).